The sequence spans 448 residues: Bifunctional protein GlmU (448 aa).

The tract at residues 1–229 (MNNHTLNIII…NDEIQGINNL (229 aa)) is pyrophosphorylase. UDP-N-acetyl-alpha-D-glucosamine is bound by residues 11–14 (LAAG), Lys25, Gln76, 81–82 (GT), 103–105 (YGD), Gly140, Glu154, Asn169, and Asn227. Asp105 is a Mg(2+) binding site. Asn227 serves as a coordination point for Mg(2+). A linker region spans residues 230–250 (LQLVRAEKIYQKQQAKLLLLS). Positions 251–448 (GIMIYNPSNF…NEKKQIHKKL (198 aa)) are N-acetyltransferase. Lys351 serves as a coordination point for UDP-N-acetyl-alpha-D-glucosamine. His363 (proton acceptor) is an active-site residue. UDP-N-acetyl-alpha-D-glucosamine is bound by residues Tyr366 and Asn377. Residues Ala380, 386-387 (NY), Ser405, and Ala423 each bind acetyl-CoA.

This sequence in the N-terminal section; belongs to the N-acetylglucosamine-1-phosphate uridyltransferase family. It in the C-terminal section; belongs to the transferase hexapeptide repeat family. As to quaternary structure, homotrimer. Mg(2+) serves as cofactor.

The protein localises to the cytoplasm. It catalyses the reaction alpha-D-glucosamine 1-phosphate + acetyl-CoA = N-acetyl-alpha-D-glucosamine 1-phosphate + CoA + H(+). The catalysed reaction is N-acetyl-alpha-D-glucosamine 1-phosphate + UTP + H(+) = UDP-N-acetyl-alpha-D-glucosamine + diphosphate. It functions in the pathway nucleotide-sugar biosynthesis; UDP-N-acetyl-alpha-D-glucosamine biosynthesis; N-acetyl-alpha-D-glucosamine 1-phosphate from alpha-D-glucosamine 6-phosphate (route II): step 2/2. Its pathway is nucleotide-sugar biosynthesis; UDP-N-acetyl-alpha-D-glucosamine biosynthesis; UDP-N-acetyl-alpha-D-glucosamine from N-acetyl-alpha-D-glucosamine 1-phosphate: step 1/1. The protein operates within bacterial outer membrane biogenesis; LPS lipid A biosynthesis. Catalyzes the last two sequential reactions in the de novo biosynthetic pathway for UDP-N-acetylglucosamine (UDP-GlcNAc). The C-terminal domain catalyzes the transfer of acetyl group from acetyl coenzyme A to glucosamine-1-phosphate (GlcN-1-P) to produce N-acetylglucosamine-1-phosphate (GlcNAc-1-P), which is converted into UDP-GlcNAc by the transfer of uridine 5-monophosphate (from uridine 5-triphosphate), a reaction catalyzed by the N-terminal domain. The polypeptide is Bifunctional protein GlmU (Buchnera aphidicola subsp. Baizongia pistaciae (strain Bp)).